We begin with the raw amino-acid sequence, 679 residues long: DNA ligase (679 aa).

NAD(+) is bound by residues 36 to 40 (DAQYD), 85 to 86 (SL), and E116. K118 acts as the N6-AMP-lysine intermediate in catalysis. NAD(+)-binding residues include R139, E174, K300, and K324. Zn(2+) contacts are provided by C418, C421, C436, and C441. A BRCT domain is found at 600-679 (EGGGPLNGKV…NEFRELTGRK (80 aa)).

Belongs to the NAD-dependent DNA ligase family. LigA subfamily. The cofactor is Mg(2+). Mn(2+) is required as a cofactor.

The catalysed reaction is NAD(+) + (deoxyribonucleotide)n-3'-hydroxyl + 5'-phospho-(deoxyribonucleotide)m = (deoxyribonucleotide)n+m + AMP + beta-nicotinamide D-nucleotide.. DNA ligase that catalyzes the formation of phosphodiester linkages between 5'-phosphoryl and 3'-hydroxyl groups in double-stranded DNA using NAD as a coenzyme and as the energy source for the reaction. It is essential for DNA replication and repair of damaged DNA. This Pelotomaculum thermopropionicum (strain DSM 13744 / JCM 10971 / SI) protein is DNA ligase.